A 152-amino-acid chain; its full sequence is Transcriptional repressor NrdR (152 aa).

Residues 3–34 (CPYCNASETKVIDSRLAAEGAQVRRRRSCNSC) fold into a zinc finger. One can recognise an ATP-cone domain in the interval 49–139 (PRIIKSSGKI…VYRDFQDIDA (91 aa)).

Belongs to the NrdR family. It depends on Zn(2+) as a cofactor.

Functionally, negatively regulates transcription of bacterial ribonucleotide reductase nrd genes and operons by binding to NrdR-boxes. The chain is Transcriptional repressor NrdR from Psychrobacter cryohalolentis (strain ATCC BAA-1226 / DSM 17306 / VKM B-2378 / K5).